The chain runs to 279 residues: MSLFDLFRGFFGFSGPRSHRDPFFGGMTRDEDEDDEEEEEEGVTWGRGNSRFEGPQSPEEFSFGFSFSPGGGMRFHDNFGFDDLVRDFNNIFSEMGAWTLPSRPPELPGPESETPGERRQEGQTLRDSMLKYPDSHQPKIFGGGLESDARSESSKPAPDWGPQRPFHRFDDTWPVTPHSRAREDNDLDTQVSQEGLGPVLQPQPKSYFKSVSVTKITKPDGTVEERRTVVDSEGRKETTVTHQEAGSSPRDGPESPTPPSLDDSSSILDLFLGRWFRSR.

S2 carries the post-translational modification N-acetylserine. Positions 2-42 (SLFDLFRGFFGFSGPRSHRDPFFGGMTRDEDEDDEEEEEEG) are required for localization in mitochondria. 2 disordered regions span residues 16-67 (PRSH…GFSF) and 97-265 (AWTL…DDSS). Positions 30 to 42 (DEDEDDEEEEEEG) are enriched in acidic residues. Residues 57-67 (SPEEFSFGFSF) show a composition bias toward low complexity. The tract at residues 114-279 (TPGERRQEGQ…LFLGRWFRSR (166 aa)) is involved in HCLS1 binding. Residues 175 to 206 (VTPHSRAREDNDLDTQVSQEGLGPVLQPQPKS) are involved in CASP9 binding. The segment at 176 to 247 (TPHSRAREDN…TTVTHQEAGS (72 aa)) is involved in GNA13 binding. The tract at residues 183–279 (EDNDLDTQVS…LFLGRWFRSR (97 aa)) is required for localization in sarcoplasmic reticulum. An involved in PKD2 binding region spans residues 184–279 (DNDLDTQVSQ…LFLGRWFRSR (96 aa)). S192 is subject to Phosphoserine. Residues 203-225 (QPKSYFKSVSVTKITKPDGTVEE) form an involved in PLN binding region. The interval 203-245 (QPKSYFKSVSVTKITKPDGTVEERRTVVDSEGRKETTVTHQEA) is involved in ATP2A2 binding. The segment at 210 to 279 (SVSVTKITKP…LFLGRWFRSR (70 aa)) is mediates interaction with UCP3. Residues 217 to 239 (TKPDGTVEERRTVVDSEGRKETT) show a composition bias toward basic and acidic residues. Residues 270-279 (LFLGRWFRSR) form a required for ITGB6 binding region.

The protein belongs to the HAX1 family. Interacts with ABCB1, ABCB4 and ABCB11. Directly associates with HCLS1/HS1, through binding to its N-terminal region. Interacts with CTTN. Interacts with PKD2. Interacts with GNA13. Interacts with CASP9. Interacts with ITGB6. Interacts with PLN and ATP2A2; these interactions are inhibited by calcium. Interacts with GRB7. Interacts (via C-terminus) with XIAP/BIRC4 (via BIR 2 domain and BIR 3 domain) and this interaction blocks ubiquitination of XIAP/BIRC4. Interacts with TPC2. Interacts with KCNC3. Interacts with XPO1. Interacts with RNF217. Interacts with UCP3; the interaction is direct and calcium-dependent. Interacts with MAPRE2; this interaction regulates cell migration in keratinocytes.

The protein resides in the mitochondrion matrix. The protein localises to the endoplasmic reticulum. It is found in the nucleus membrane. It localises to the cytoplasmic vesicle. Its subcellular location is the cytoplasm. The protein resides in the cell cortex. The protein localises to the cell membrane. It is found in the sarcoplasmic reticulum. It localises to the P-body. Its subcellular location is the nucleus. In terms of biological role, recruits the Arp2/3 complex to the cell cortex and regulates reorganization of the cortical actin cytoskeleton via its interaction with KCNC3 and the Arp2/3 complex. Slows down the rate of inactivation of KCNC3 channels. Promotes GNA13-mediated cell migration. Involved in the clathrin-mediated endocytosis pathway. May be involved in internalization of ABC transporters such as ABCB11. May inhibit CASP9 and CASP3. Promotes cell survival. May regulate intracellular calcium pools. The polypeptide is HCLS1-associated protein X-1 (HAX1) (Bos taurus (Bovine)).